A 298-amino-acid polypeptide reads, in one-letter code: MSKLISYAAKSPLRNIRLGATQIICQHASTDCMHMAASASASSSARKTYSTLAVDLTKQQMLLRKPLETLALQITKRSMFIQTQDTPNPDSLKFLPGVEVLGKGNTYDFPSATAAHCSPLAKLLFRVEGVRAVFFGSDFITISKEENGEWGLIKPEVFAVIMDFFASGLPILHEARPNADTEILEDDDETVMMIKELLDTRIRPTVQEDGGDIVFISYEKGVVKLKMQGSCSSCPSSIVTLKNGVQNMLQFYIPEVESVEQVFDEVDKVANSEFERFEKSLKQKDSANPPVSIGGTQN.

The segment at 194–262 (IKELLDTRIR…IPEVESVEQV (69 aa)) is nifU. The [4Fe-4S] cluster site is built by Cys-231 and Cys-234.

The protein belongs to the NifU family.

The protein resides in the mitochondrion. In terms of biological role, molecular scaffold for [Fe-S] cluster assembly of mitochondrial iron-sulfur proteins. This is NFU1 iron-sulfur cluster scaffold homolog, mitochondrial from Drosophila grimshawi (Hawaiian fruit fly).